Consider the following 502-residue polypeptide: Myocilin (502 aa).

Positions 1-31 (MPSCAYCCSCGPKMPALQLLFLACLVWGMGA) are cleaved as a signal peptide. A coiled-coil region spans residues 82–183 (ADLESTKARV…QEVARLRRGQ (102 aa)). The disordered stretch occupies residues 166-198 (ARRLEGSSQEVARLRRGQCPSTHHPSQDMLPGS). A glycan (N-linked (GlcNAc...) asparagine) is linked at Asn-229. The 260-residue stretch at 242 to 501 (GCGVLMWVGE…MVTYDIKLSE (260 aa)) folds into the Olfactomedin-like domain. An intrachain disulfide couples Cys-243 to Cys-431. Residues Asp-378, Asn-426, Ala-427, Val-475, and Asp-476 each contribute to the Ca(2+) site.

As to quaternary structure, homodimer (via N-terminus). Can also form higher oligomers. Interacts with OLFM3, FN1, NRCAM, GLDN and NFASC. Interacts (via N-terminus) with MYL2. Interacts with SFRP1, FRZB, FZD7, FZD10, FZD1 and WIF1; regulates Wnt signaling. Interacts with SNTA1; regulates muscle hypertrophy. Interacts with ERBB2 and ERBB3; activates ERBB2-ERBB3 signaling pathway. Interacts with SNCG; affects its secretion and its aggregation. Palmitoylated. Post-translationally, undergoes a calcium-dependent proteolytic cleavage at Gln-225 by CAPN2 in the endoplasmic reticulum. The result is the production of two fragments, one of 35 kDa containing the C-terminal olfactomedin-like domain, and another of 20 kDa containing the N-terminal leucine zipper-like domain. In terms of processing, glycosylated. Highly expressed in skeletal muscle and retina. Also detected at lower levels in thyroid gland but not in other endocrine glands such as the adrenal or pituitary glands.

Its subcellular location is the secreted. The protein localises to the golgi apparatus. It localises to the cytoplasmic vesicle. It is found in the extracellular space. The protein resides in the extracellular matrix. Its subcellular location is the extracellular exosome. The protein localises to the mitochondrion. It localises to the mitochondrion intermembrane space. It is found in the mitochondrion inner membrane. The protein resides in the mitochondrion outer membrane. Its subcellular location is the rough endoplasmic reticulum. The protein localises to the cell projection. It localises to the cilium. It is found in the endoplasmic reticulum. Functionally, secreted glycoprotein regulating the activation of different signaling pathways in adjacent cells to control different processes including cell adhesion, cell-matrix adhesion, cytoskeleton organization and cell migration. Promotes substrate adhesion, spreading and formation of focal contacts. Negatively regulates cell-matrix adhesion and stress fiber assembly through Rho protein signal transduction. Modulates the organization of actin cytoskeleton by stimulating the formation of stress fibers through interactions with components of Wnt signaling pathways. Promotes cell migration through activation of PTK2 and the downstream phosphatidylinositol 3-kinase signaling. Plays a role in bone formation and promotes osteoblast differentiation in a dose-dependent manner through mitogen-activated protein kinase signaling. Mediates myelination in the peripheral nervous system through ERBB2/ERBB3 signaling. Plays a role as a regulator of muscle hypertrophy through the components of dystrophin-associated protein complex. Involved in positive regulation of mitochondrial depolarization. Plays a role in neurite outgrowth. May participate in the obstruction of fluid outflow in the trabecular meshwork. This Rattus norvegicus (Rat) protein is Myocilin (Myoc).